A 178-amino-acid chain; its full sequence is ATP-dependent protease subunit HslV (178 aa).

The active site involves threonine 7. Na(+) is bound by residues glycine 162, cysteine 165, and threonine 168.

Belongs to the peptidase T1B family. HslV subfamily. A double ring-shaped homohexamer of HslV is capped on each side by a ring-shaped HslU homohexamer. The assembly of the HslU/HslV complex is dependent on binding of ATP.

The protein localises to the cytoplasm. The catalysed reaction is ATP-dependent cleavage of peptide bonds with broad specificity.. Allosterically activated by HslU binding. Protease subunit of a proteasome-like degradation complex believed to be a general protein degrading machinery. This Cupriavidus pinatubonensis (strain JMP 134 / LMG 1197) (Cupriavidus necator (strain JMP 134)) protein is ATP-dependent protease subunit HslV.